Reading from the N-terminus, the 624-residue chain is Dihydroxy-acid dehydratase (624 aa).

Aspartate 81 provides a ligand contact to Mg(2+). Cysteine 122 lines the [2Fe-2S] cluster pocket. Aspartate 123 and lysine 124 together coordinate Mg(2+). Lysine 124 is modified (N6-carboxylysine). Cysteine 195 is a [2Fe-2S] cluster binding site. Glutamate 499 lines the Mg(2+) pocket. Serine 525 (proton acceptor) is an active-site residue.

The protein belongs to the IlvD/Edd family. Homodimer. [2Fe-2S] cluster is required as a cofactor. It depends on Mg(2+) as a cofactor.

The enzyme catalyses (2R)-2,3-dihydroxy-3-methylbutanoate = 3-methyl-2-oxobutanoate + H2O. It catalyses the reaction (2R,3R)-2,3-dihydroxy-3-methylpentanoate = (S)-3-methyl-2-oxopentanoate + H2O. It participates in amino-acid biosynthesis; L-isoleucine biosynthesis; L-isoleucine from 2-oxobutanoate: step 3/4. It functions in the pathway amino-acid biosynthesis; L-valine biosynthesis; L-valine from pyruvate: step 3/4. Functions in the biosynthesis of branched-chain amino acids. Catalyzes the dehydration of (2R,3R)-2,3-dihydroxy-3-methylpentanoate (2,3-dihydroxy-3-methylvalerate) into 2-oxo-3-methylpentanoate (2-oxo-3-methylvalerate) and of (2R)-2,3-dihydroxy-3-methylbutanoate (2,3-dihydroxyisovalerate) into 2-oxo-3-methylbutanoate (2-oxoisovalerate), the penultimate precursor to L-isoleucine and L-valine, respectively. This is Dihydroxy-acid dehydratase from Shewanella baltica (strain OS185).